The sequence spans 271 residues: Tryptophan synthase alpha chain (271 aa).

Residues Glu51 and Asp62 each act as proton acceptor in the active site.

The protein belongs to the TrpA family. As to quaternary structure, tetramer of two alpha and two beta chains.

It carries out the reaction (1S,2R)-1-C-(indol-3-yl)glycerol 3-phosphate + L-serine = D-glyceraldehyde 3-phosphate + L-tryptophan + H2O. Its pathway is amino-acid biosynthesis; L-tryptophan biosynthesis; L-tryptophan from chorismate: step 5/5. In terms of biological role, the alpha subunit is responsible for the aldol cleavage of indoleglycerol phosphate to indole and glyceraldehyde 3-phosphate. The polypeptide is Tryptophan synthase alpha chain (Prochlorococcus marinus (strain NATL2A)).